The primary structure comprises 394 residues: Beta-ketothiolase BktB (394 aa).

Cysteine 90 serves as the catalytic Acyl-thioester intermediate. Residues histidine 350 and cysteine 380 each act as proton acceptor in the active site.

Belongs to the thiolase-like superfamily. Thiolase family.

The catalysed reaction is an acyl-CoA + acetyl-CoA = a 3-oxoacyl-CoA + CoA. The enzyme catalyses 2 acetyl-CoA = acetoacetyl-CoA + CoA. Required for efficient production of poly(beta-hydroxybutyrate-co-beta-hydroxyvalerate) (PHBV). Catalyzes the condensation of acetyl-CoA and propionyl-CoA to form beta-ketovaleryl-CoA, and the condensation of two acetyl-CoA molecules to form acetoacetyl-CoA. This Cupriavidus necator (strain ATCC 17699 / DSM 428 / KCTC 22496 / NCIMB 10442 / H16 / Stanier 337) (Ralstonia eutropha) protein is Beta-ketothiolase BktB (bktB).